The following is a 248-amino-acid chain: UPF0736 protein BCE33L1074 (248 aa).

It belongs to the UPF0736 family.

This is UPF0736 protein BCE33L1074 from Bacillus cereus (strain ZK / E33L).